The sequence spans 238 residues: Sugar fermentation stimulation protein homolog (238 aa).

It belongs to the SfsA family.

The sequence is that of Sugar fermentation stimulation protein homolog from Vibrio vulnificus (strain YJ016).